The following is a 333-amino-acid chain: Tetraacyldisaccharide 4'-kinase (333 aa).

55 to 62 (TAGGNGKT) contacts ATP.

Belongs to the LpxK family.

The catalysed reaction is a lipid A disaccharide + ATP = a lipid IVA + ADP + H(+). It participates in glycolipid biosynthesis; lipid IV(A) biosynthesis; lipid IV(A) from (3R)-3-hydroxytetradecanoyl-[acyl-carrier-protein] and UDP-N-acetyl-alpha-D-glucosamine: step 6/6. In terms of biological role, transfers the gamma-phosphate of ATP to the 4'-position of a tetraacyldisaccharide 1-phosphate intermediate (termed DS-1-P) to form tetraacyldisaccharide 1,4'-bis-phosphate (lipid IVA). In Pectobacterium carotovorum subsp. carotovorum (strain PC1), this protein is Tetraacyldisaccharide 4'-kinase.